Reading from the N-terminus, the 569-residue chain is Glutamate--tRNA ligase, chloroplastic/mitochondrial (569 aa).

L-glutamate is bound at residue 59–61; the sequence is RFA. Positions 62–72 match the 'HIGH' region motif; it reads PSPTGNLHVGG. Residue H69 coordinates ATP. L-glutamate-binding positions include E95, 247–251, and R265; that span reads YNFCV. ATP contacts are provided by residues E268 and 303-307; that span reads KLSKR. The short motif at 303–307 is the 'KMSKS' region element; the sequence is KLSKR.

The protein belongs to the class-I aminoacyl-tRNA synthetase family. Glutamate--tRNA ligase type 1 subfamily.

Its subcellular location is the plastid. It localises to the chloroplast. The protein resides in the mitochondrion. It carries out the reaction tRNA(Glu) + L-glutamate + ATP = L-glutamyl-tRNA(Glu) + AMP + diphosphate. In terms of biological role, catalyzes the attachment of glutamate to tRNA(Glu) in a two-step reaction: glutamate is first activated by ATP to form Glu-AMP and then transferred to the acceptor end of tRNA(Glu). This is Glutamate--tRNA ligase, chloroplastic/mitochondrial from Nicotiana tabacum (Common tobacco).